A 197-amino-acid polypeptide reads, in one-letter code: Phospholipid hydroperoxide glutathione peroxidase (197 aa).

Position 40 is a phosphoserine (Ser-40). Sec-73 is an active-site residue. Sec-73 is a non-standard amino acid (selenocysteine). The residue at position 78 (Val-78) is a Phosphoserine.

It belongs to the glutathione peroxidase family. Monomer. Has a tendency to form higher mass oligomers. Interacts with FUNDC1; this interaction promotes GPX4 recruitment into mitochondria through TOM/TIM complex where it is degraded by mitophagy. In terms of tissue distribution, present primarily in testis. Expressed in flagella of epididymal sperm. Isoform Cytoplasmic: Highly expressed in testis. Present in spermatogonia, spermatocyte and spermatid (at protein level).

The protein resides in the nucleus. The protein localises to the nucleolus. Its subcellular location is the mitochondrion. It localises to the cytoplasm. The catalysed reaction is a hydroperoxy polyunsaturated fatty acid + 2 glutathione = a hydroxy polyunsaturated fatty acid + glutathione disulfide + H2O. The enzyme catalyses 2 glutathione + H2O2 = glutathione disulfide + 2 H2O. It carries out the reaction tert-butyl hydroperoxide + 2 glutathione = tert-butanol + glutathione disulfide + H2O. It catalyses the reaction cumene hydroperoxide + 2 glutathione = 2-phenylpropan-2-ol + glutathione disulfide + H2O. The catalysed reaction is (9S)-hydroperoxy-(10E,12Z)-octadecadienoate + 2 glutathione = (9S)-hydroxy-(10E,12Z)-octadecadienoate + glutathione disulfide + H2O. The enzyme catalyses (13S)-hydroperoxy-(9Z,11E)-octadecadienoate + 2 glutathione = (13S)-hydroxy-(9Z,11E)-octadecadienoate + glutathione disulfide + H2O. It carries out the reaction (5S)-hydroperoxy-(6E,8Z,11Z,14Z)-eicosatetraenoate + 2 glutathione = (5S)-hydroxy-(6E,8Z,11Z,14Z)-eicosatetraenoate + glutathione disulfide + H2O. It catalyses the reaction (12R)-hydroperoxy-(5Z,8Z,10E,14Z)-eicosatetraenoate + 2 glutathione = (12R)-hydroxy-(5Z,8Z,10E,14Z)-eicosatetraenoate + glutathione disulfide + H2O. The catalysed reaction is (12S)-hydroperoxy-(5Z,8Z,10E,14Z)-eicosatetraenoate + 2 glutathione = (12S)-hydroxy-(5Z,8Z,10E,14Z)-eicosatetraenoate + glutathione disulfide + H2O. The enzyme catalyses (15S)-hydroperoxy-(5Z,8Z,11Z,13E)-eicosatetraenoate + 2 glutathione = (15S)-hydroxy-(5Z,8Z,11Z,13E)-eicosatetraenoate + glutathione disulfide + H2O. It carries out the reaction (5S)-hydroperoxy-(6E,8Z,11Z,14Z,17Z)-eicosapentaenoate + 2 glutathione = (5S)-hydroxy-(6E,8Z,11Z,14Z,17Z)-eicosapentaenoate + glutathione disulfide + H2O. It catalyses the reaction (12S)-hydroperoxy-(5Z,8Z,10E,14Z,17Z)-eicosapentaenoate + 2 glutathione = (12S)-hydroxy-(5Z,8Z,10E,14Z,17Z)-eicosapentaenoate + glutathione disulfide + H2O. The catalysed reaction is (15S)-hydroperoxy-(5Z,8Z,11Z,13E,17Z)-eicosapentaenoate + 2 glutathione = (15S)-hydroxy-(5Z,8Z,11Z,13E,17Z)-eicosapentaenoate + glutathione disulfide + H2O. The enzyme catalyses (15S)-hydroperoxy-(11Z,13E)-eicosadienoate + 2 glutathione = (15S)-hydroxy-(11Z,13E)-eicosadienoate + glutathione disulfide + H2O. It carries out the reaction (17S)-hydroperoxy-(4Z,7Z,10Z,13Z,15E,19Z)-docosahexaenoate + 2 glutathione = (17S)-hydroxy-(4Z,7Z,10Z,13Z,15E,19Z)-docosahexaenoate + glutathione disulfide + H2O. It catalyses the reaction a hydroperoxy-1,2-diacyl-glycero-3-phosphocholine + 2 glutathione = a hydroxy-1,2-diacyl-glycero-3-phosphocholine + glutathione disulfide + H2O. In terms of biological role, essential antioxidant peroxidase that directly reduces phospholipid hydroperoxide even if they are incorporated in membranes and lipoproteins. Can also reduce fatty acid hydroperoxide, cholesterol hydroperoxide and thymine hydroperoxide. Plays a key role in protecting cells from oxidative damage by preventing membrane lipid peroxidation. Required to prevent cells from ferroptosis, a non-apoptotic cell death resulting from an iron-dependent accumulation of lipid reactive oxygen species. The presence of selenocysteine (Sec) versus Cys at the active site is essential for life: it provides resistance to overoxidation and prevents cells against ferroptosis. The presence of Sec at the active site is also essential for the survival of a specific type of parvalbumin-positive interneurons, thereby preventing against fatal epileptic seizures. May be required to protect cells from the toxicity of ingested lipid hydroperoxides. Required for normal sperm development and male fertility. Essential for maturation and survival of photoreceptor cells. Plays a role in a primary T-cell response to viral and parasitic infection by protecting T-cells from ferroptosis and by supporting T-cell expansion. Plays a role of glutathione peroxidase in platelets in the arachidonic acid metabolism. Reduces hydroperoxy ester lipids formed by a 15-lipoxygenase that may play a role as down-regulator of the cellular 15-lipoxygenase pathway. Can also reduce small soluble hydroperoxides such as H2O2, cumene hydroperoxide and tert-butyl hydroperoxide. Specifically able to suppress the production of leukotriene and prostaglandin in response to several stimuli by reducing fatty acid hydroperoxide. Its function is as follows. Specifically required to prevent mitochondrial cell death by mediating reduction of cardiolipin hydroperoxide. Also required for normal sperm development and male fertility. Functionally, required for male fertility by stabilizing the condensed chromatin in sperm nuclei. The polypeptide is Phospholipid hydroperoxide glutathione peroxidase (Rattus norvegicus (Rat)).